A 154-amino-acid chain; its full sequence is Endoribonuclease YbeY (154 aa).

Zn(2+) contacts are provided by H113, H117, and H123.

The protein belongs to the endoribonuclease YbeY family. It depends on Zn(2+) as a cofactor.

It is found in the cytoplasm. Functionally, single strand-specific metallo-endoribonuclease involved in late-stage 70S ribosome quality control and in maturation of the 3' terminus of the 16S rRNA. This chain is Endoribonuclease YbeY, found in Anaplasma marginale (strain Florida).